A 281-amino-acid polypeptide reads, in one-letter code: Arylamine N-acetyltransferase (281 aa).

Cys-69 acts as the Acyl-thioester intermediate in catalysis. Catalysis depends on residues His-107 and Asp-122. N6-acetyllysine is present on residues Lys-214 and Lys-281.

It belongs to the arylamine N-acetyltransferase family. In terms of assembly, homodimer. Post-translationally, acetylated on Lys-214 and Lys-281. Deacetylated by CobB.

It is found in the cytoplasm. The enzyme catalyses an arylamine + acetyl-CoA = an N-acetylarylamine + CoA. The catalysed reaction is an N-hydroxyarylamine + acetyl-CoA = an N-acetoxyarylamine + CoA. Its activity is regulated as follows. Inhibited by salicylic acid, acetylsalicylic acid, 2,6-dichrolo-4-nitrophenol, N-ethylmaleimide and iodoacetamide. Catalyzes the acetyl-CoA-dependent N-acetylation of aromatic amines, and, probably, the O-acetylation of N-hydroxyarylamines. In vitro, catalyzes the N-acetylation of various arylamines such as aminobenzoic acid, aminophenol, aminotoluene, phenetidine, anisidine, aniline, isoniazid and 2-amino-fluorene. N-hydroxyarylamine O-acetyltransferase activity has not been assayed directly, however, NhoA activity is required for the mutagenicity of nitroaromatic compounds, suggesting that it also has O-acetyltransferase activity. In Escherichia coli (strain K12), this protein is Arylamine N-acetyltransferase (nhoA).